A 237-amino-acid chain; its full sequence is Phosphoribosylaminoimidazole-succinocarboxamide synthase (237 aa).

It belongs to the SAICAR synthetase family.

It carries out the reaction 5-amino-1-(5-phospho-D-ribosyl)imidazole-4-carboxylate + L-aspartate + ATP = (2S)-2-[5-amino-1-(5-phospho-beta-D-ribosyl)imidazole-4-carboxamido]succinate + ADP + phosphate + 2 H(+). Its pathway is purine metabolism; IMP biosynthesis via de novo pathway; 5-amino-1-(5-phospho-D-ribosyl)imidazole-4-carboxamide from 5-amino-1-(5-phospho-D-ribosyl)imidazole-4-carboxylate: step 1/2. This is Phosphoribosylaminoimidazole-succinocarboxamide synthase from Citrobacter koseri (strain ATCC BAA-895 / CDC 4225-83 / SGSC4696).